The sequence spans 873 residues: Alanine--tRNA ligase (873 aa).

Positions 563, 567, 664, and 668 each coordinate Zn(2+).

Belongs to the class-II aminoacyl-tRNA synthetase family. The cofactor is Zn(2+).

The protein resides in the cytoplasm. It catalyses the reaction tRNA(Ala) + L-alanine + ATP = L-alanyl-tRNA(Ala) + AMP + diphosphate. In terms of biological role, catalyzes the attachment of alanine to tRNA(Ala) in a two-step reaction: alanine is first activated by ATP to form Ala-AMP and then transferred to the acceptor end of tRNA(Ala). Also edits incorrectly charged Ser-tRNA(Ala) and Gly-tRNA(Ala) via its editing domain. The chain is Alanine--tRNA ligase from Aromatoleum aromaticum (strain DSM 19018 / LMG 30748 / EbN1) (Azoarcus sp. (strain EbN1)).